We begin with the raw amino-acid sequence, 143 residues long: Snake venom vascular endothelial growth factor toxin (143 aa).

An N-terminal signal peptide occupies residues M1–G24. At E25 the chain carries Pyrrolidone carboxylic acid (Glu). 3 cysteine pairs are disulfide-bonded: C38-C80, C69-C115, and C73-C117. The disordered stretch occupies residues C117–V143.

Belongs to the PDGF/VEGF growth factor family. Snake venom VEGF subfamily. As to quaternary structure, homodimer; disulfide-linked. Interacts with VEGF receptor-1 (FLT1) with a high affinity, whereas it binds to VEGF receptor-2 (KDR) with a low affinity. Does not bind to VEGFR-3/FLT4 and neuropilin-1 (NRP1). In terms of tissue distribution, expressed by the venom gland.

The protein resides in the secreted. Functionally, snake venom VEGFs may contribute to venom dispersion and prey subjugation by inducing vascular permeability and hypotension. This protein activates the vascular endothelial growth factor receptor-1 (VEGFR-1/FLT1), and consequently promotes the proliferation and tissue factor production of endothelial cells, the neovascularization in the chicken chorioallantoic membrane, and increases vascular permeability. Also stimulates tissue-factor production and human monocyte chemotaxis. The polypeptide is Snake venom vascular endothelial growth factor toxin (Protobothrops mucrosquamatus (Taiwan habu)).